The sequence spans 331 residues: Tetraacyldisaccharide 4'-kinase (331 aa).

Residue 55-62 (SVGGNGKT) participates in ATP binding.

It belongs to the LpxK family.

The catalysed reaction is a lipid A disaccharide + ATP = a lipid IVA + ADP + H(+). The protein operates within glycolipid biosynthesis; lipid IV(A) biosynthesis; lipid IV(A) from (3R)-3-hydroxytetradecanoyl-[acyl-carrier-protein] and UDP-N-acetyl-alpha-D-glucosamine: step 6/6. Its function is as follows. Transfers the gamma-phosphate of ATP to the 4'-position of a tetraacyldisaccharide 1-phosphate intermediate (termed DS-1-P) to form tetraacyldisaccharide 1,4'-bis-phosphate (lipid IVA). The protein is Tetraacyldisaccharide 4'-kinase of Aeromonas salmonicida (strain A449).